The sequence spans 635 residues: Two-component response regulator ARR18 (635 aa).

Residues 19–133 (RVLAVDDNPT…ELQNIWHHVV (115 aa)) enclose the Response regulatory domain. 4-aspartylphosphate is present on aspartate 70. Disordered stretches follow at residues 144–196 (LPPS…KKPR) and 323–342 (IQQG…GTYH). Over residues 166 to 186 (SGDEDDSDREEDDGEGSEQDG) the composition is skewed to acidic residues. A Nuclear localization signal motif is present at residues 193–196 (KKPR). A DNA-binding region (myb-like GARP) is located at residues 196–246 (RVVWSQELHQKFVSAVQQLGLDKAVPKKILDLMSIEGLTRENVASHLQKYR).

The protein belongs to the ARR family. Type-B subfamily. As to quaternary structure, binds the target DNA as a monomer. Post-translationally, two-component system major event consists of a His-to-Asp phosphorelay between a sensor histidine kinase (HK) and a response regulator (RR). In plants, the His-to-Asp phosphorelay involves an additional intermediate named Histidine-containing phosphotransfer protein (HPt). This multistep phosphorelay consists of a His-Asp-His-Asp sequential transfer of a phosphate group between first a His and an Asp of the HK protein, followed by the transfer to a conserved His of the HPt protein and finally the transfer to an Asp in the receiver domain of the RR protein. Predominantly expressed in young leaf tissue developing anthers, and siliques.

Its subcellular location is the nucleus. In terms of biological role, transcriptional activator that binds specifically to the DNA sequence 5'-[AG]GATT-3'. Functions as a response regulator involved in His-to-Asp phosphorelay signal transduction system. Phosphorylation of the Asp residue in the receiver domain activates the ability of the protein to promote the transcription of target genes. Could directly activate some type-A response regulators in response to cytokinins. The chain is Two-component response regulator ARR18 (ARR18) from Arabidopsis thaliana (Mouse-ear cress).